The primary structure comprises 971 residues: Sodium/calcium exchanger 1 (971 aa).

An N-terminal signal peptide occupies residues Met1–Ala32. Residues Asp33–Lys71 lie on the Extracellular side of the membrane. Asn41 carries an N-linked (GlcNAc...) asparagine glycan. A helical transmembrane segment spans residues Ile72–Ile92. The Cytoplasmic portion of the chain corresponds to Ala93 to Asn133. Residues Leu134–Cys154 form a helical membrane-spanning segment. Residues Ala138–Ile178 form an Alpha-1 repeat. Residues Gly155–Thr167 are Extracellular-facing. N-linked (GlcNAc...) asparagine glycosylation occurs at Asn157. The helical transmembrane segment at Ile168–Pro188 threads the bilayer. Residues Asp189–Phe201 lie on the Cytoplasmic side of the membrane. A helical transmembrane segment spans residues Phe202 to Ser222. Residues Ser223–Glu228 lie on the Extracellular side of the membrane. A helical membrane pass occupies residues Val229–Ala249. The Cytoplasmic portion of the chain corresponds to Asp250–Gly798. The segment at Arg251–Gly270 is putative calmodulin-binding region. Phosphoserine is present on residues Ser282 and Ser389. Calx-beta domains are found at residues Val393 to Ser493 and Ala524 to Gly624. 16 residues coordinate Ca(2+): Glu417, Asp453, Asp478, Asp479, Ile481, Glu483, Glu486, Asp530, Asp531, Asp532, Glu548, Asp584, Asp610, Glu611, Glu612, and Glu716. The helical transmembrane segment at Trp799 to Leu819 threads the bilayer. Residues Ala820 to His822 are Extracellular-facing. The chain crosses the membrane as a helical span at residues Phe823–Thr843. The Alpha-2 repeat unit spans residues Ala840 to Val876. The Cytoplasmic segment spans residues Ser844–Asn872. Residues Ala873–Ala893 traverse the membrane as a helical segment. At Asn894 to Thr904 the chain is on the extracellular side. The chain crosses the membrane as a helical span at residues Leu905 to Tyr925. Residues Arg926–Lys942 are Cytoplasmic-facing. Residues Leu943–Glu963 form a helical membrane-spanning segment. Residues Ala964 to Phe971 are Extracellular-facing.

Belongs to the Ca(2+):cation antiporter (CaCA) (TC 2.A.19) family. SLC8 subfamily. In terms of tissue distribution, detected in heart, brain cortex and hippocampus (at protein level). Cardiac sarcolemma or brain, and spleen. Expressed in all regions of the kidney, highest levels of expression in the distal convoluted tubule. Expressed throughout the CNS, in decreasing order of abundance in hippocampus, cortex, cerebellum, hypothalamus, midbrain and striatum. Expressed in numerous regions of the brain including multiple cortical layers, hippocampus, septal nuclei, thalamic nuclei, cerebellum, hypothalamus, olfactory bulb and brainstem. Also expressed in various regions of the spinal cord, ventricles and atria of the heart, lung, adrenals and kidney. Isoform 4 seems to be a predominant isoform in aorta, stomach, liver, and kidney.

It localises to the cell membrane. Its subcellular location is the cell projection. It is found in the dendrite. The catalysed reaction is Ca(2+)(in) + 3 Na(+)(out) = Ca(2+)(out) + 3 Na(+)(in). Its activity is regulated as follows. Activated by micromolar levels of Ca(2+). Only active at low calcium concentrations. Not activated by PKC. With respect to regulation, active at all calcium levels tested. Activated by PKC. Its activity is regulated as follows. Only active at low calcium concentrations. Activated by PKC. Functionally, mediates the exchange of one Ca(2+) ion against three to four Na(+) ions across the cell membrane, and thereby contributes to the regulation of cytoplasmic Ca(2+) levels and Ca(2+)-dependent cellular processes. Contributes to Ca(2+) transport during excitation-contraction coupling in muscle. In a first phase, voltage-gated channels mediate the rapid increase of cytoplasmic Ca(2+) levels due to release of Ca(2+) stores from the endoplasmic reticulum. SLC8A1 mediates the export of Ca(2+) from the cell during the next phase, so that cytoplasmic Ca(2+) levels rapidly return to baseline. Required for normal embryonic heart development and the onset of heart contractions. This chain is Sodium/calcium exchanger 1 (Slc8a1), found in Rattus norvegicus (Rat).